We begin with the raw amino-acid sequence, 110 residues long: UPF0251 protein PH0803 (110 aa).

Belongs to the UPF0251 family.

The protein is UPF0251 protein PH0803 of Pyrococcus horikoshii (strain ATCC 700860 / DSM 12428 / JCM 9974 / NBRC 100139 / OT-3).